We begin with the raw amino-acid sequence, 241 residues long: Phosphoribosylaminoimidazole-succinocarboxamide synthase (241 aa).

The protein belongs to the SAICAR synthetase family.

The catalysed reaction is 5-amino-1-(5-phospho-D-ribosyl)imidazole-4-carboxylate + L-aspartate + ATP = (2S)-2-[5-amino-1-(5-phospho-beta-D-ribosyl)imidazole-4-carboxamido]succinate + ADP + phosphate + 2 H(+). It functions in the pathway purine metabolism; IMP biosynthesis via de novo pathway; 5-amino-1-(5-phospho-D-ribosyl)imidazole-4-carboxamide from 5-amino-1-(5-phospho-D-ribosyl)imidazole-4-carboxylate: step 1/2. This Lacticaseibacillus paracasei (strain ATCC 334 / BCRC 17002 / CCUG 31169 / CIP 107868 / KCTC 3260 / NRRL B-441) (Lactobacillus paracasei) protein is Phosphoribosylaminoimidazole-succinocarboxamide synthase.